Here is a 279-residue protein sequence, read N- to C-terminus: ATP synthase subunit delta (279 aa).

Belongs to the ATPase delta chain family. As to quaternary structure, F-type ATPases have 2 components, F(1) - the catalytic core - and F(0) - the membrane proton channel. F(1) has five subunits: alpha(3), beta(3), gamma(1), delta(1), epsilon(1). F(0) has three main subunits: a(1), b(2) and c(10-14). The alpha and beta chains form an alternating ring which encloses part of the gamma chain. F(1) is attached to F(0) by a central stalk formed by the gamma and epsilon chains, while a peripheral stalk is formed by the delta and b chains.

Its subcellular location is the cell membrane. F(1)F(0) ATP synthase produces ATP from ADP in the presence of a proton or sodium gradient. F-type ATPases consist of two structural domains, F(1) containing the extramembraneous catalytic core and F(0) containing the membrane proton channel, linked together by a central stalk and a peripheral stalk. During catalysis, ATP synthesis in the catalytic domain of F(1) is coupled via a rotary mechanism of the central stalk subunits to proton translocation. Functionally, this protein is part of the stalk that links CF(0) to CF(1). It either transmits conformational changes from CF(0) to CF(1) or is implicated in proton conduction. The polypeptide is ATP synthase subunit delta (Parafrankia sp. (strain EAN1pec)).